Consider the following 86-residue polypeptide: DNA replication protein 1 (86 aa).

A coiled-coil region spans residues leucine 38–asparagine 67.

Belongs to the phi29likevirus DNA replication protein 1 family. In terms of assembly, homomultimer. Self-associates into large complexes forming long filamentous structures. Interacts (via N-terminus) with the primer terminal protein. Interacts with host FtsZ protein.

The protein localises to the host membrane. In terms of biological role, protein that assembles into highly ordered structures and provides a specific site for viral DNA replication. Probably anchors the viral DNA replisome to the host membrane. The chain is DNA replication protein 1 (1) from Bacillus subtilis (Bacteriophage phi-29).